Here is a 189-residue protein sequence, read N- to C-terminus: Cancer/testis antigen family 45 member A1 (189 aa).

The segment covering 1–23 has biased composition (basic and acidic residues); it reads MTDKTEKVAVDPETVFKRPRECD. 2 disordered regions span residues 1–27 and 83–118; these read MTDKTEKVAVDPETVFKRPRECDSPSY and RMMQKPGSNAPVGGNVTSSFSGDDLECRETASSPKS.

The protein belongs to the CT45 family. In terms of tissue distribution, testis specific. Expressed in cancer cell lines.

It localises to the nucleus. In Homo sapiens (Human), this protein is Cancer/testis antigen family 45 member A1.